The primary structure comprises 685 residues: MAAAAVAARRLSFRSGLVLLQTTRGTGVCEPKVCCRFYAGTESLPKVEGSDITGIEEIVIPKKKTWDKVAVLQALASTVNRDPTAAPYVFHDDPYLIPTSALESRSFLLAKKSGETAAKFIINSYPKYFQKDIAEPHIPCLMPEYFEPQIEDVSEAALEERIRLRKVRASVDMFDQLLQAGTTVSLETTNSLLDLLCYYGDQEPPADYPFQQTEHLENLEEAAEENNQTSKMESGPWKAQNNAERIFALMPEKNARSYCTMIRGMVKHRAYAQALNVYTELLNNRLSADVYTFNALIEAKTFILNEKFEEKWNDILDLLKHMVAQKVKPNLQTFNTILKGLRKCYSLGRIPALQILREMKHIGIEPSLATYHHIIHLFYPRDLSAIKMPSLIIYDIMNELEGRTFSPQDLDDGRFFQLAMSVCSSLRDLELAYQVHRLLNTGDNRKLVGHDPLRKVYYSKFFSLICSLEQIDVTLKWYKDLIPSVFLPHYQIFIGLLQALDVANRLELVPQIWKDSKEYSHTFRDALREEVLMLMARDKHPPELQVAFADCAADIKSTYEDQSARQPAFDWPANPLQYIAVLFLRGGRSQEAWKMLELFKKHKKIPRNELLEEFMDTAKASGSTALAIEVVKLASAFSLPIGESLAQRVVMDFTVDPEQKEALGNLTELNSSDGESSSDSDSDDK.

The N-terminal 10 residues, 1-10 (MAAAAVAARR), are a transit peptide targeting the mitochondrion. K127 carries the N6-acetyllysine modification. PPR repeat units follow at residues 150-184 (IEDVSEAALEERIRLRKVRASVDMFDQLLQAGTTV), 185-220 (SLETTNSLLDLLCYYGDQEPPADYPFQQTEHLENLE), 254-288 (NARSYCTMIRGMVKHRAYAQALNVYTELLNNRLSA), 289-329 (DVYT…KVKP), 330-366 (NLQTFNTILKGLRKCYSLGRIPALQILREMKHIGIEP), 367-407 (SLAT…TFSP), 412-446 (DGRFFQLAMSVCSSLRDLELAYQVHRLLNTGDNRK), 454-488 (RKVYYSKFFSLICSLEQIDVTLKWYKDLIPSVFLP), 489-523 (HYQIFIGLLQALDVANRLELVPQIWKDSKEYSHTF), and 572-606 (PANPLQYIAVLFLRGGRSQEAWKMLELFKKHKKIP). Positions 663-685 (LGNLTELNSSDGESSSDSDSDDK) are disordered. Acidic residues predominate over residues 676-685 (SSSDSDSDDK).

This sequence belongs to the mitochondrion-specific ribosomal protein mS39 family. In terms of assembly, component of the mitochondrial ribosome small subunit (28S) which comprises a 12S rRNA and about 30 distinct proteins. Associated with the 12S mitochondrial rRNA (12S mt-rRNA).

The protein localises to the mitochondrion. Functionally, mitochondrial RNA-binding protein that has a role in mitochondrial translation. This Mus musculus (Mouse) protein is Small ribosomal subunit protein mS39 (Ptcd3).